The chain runs to 435 residues: F-box only protein 9 (435 aa).

Residues 1–25 (MAEAEEDCHSDAVRVGDEGHESPAE) form a disordered region. The span at 7-25 (DCHSDAVRVGDEGHESPAE) shows a compositional bias: basic and acidic residues. One copy of the TPR repeat lies at 82 to 115 (ARELFLKAVEEEQNGALYEAIKFYRRAMQLVPDI). Ser124 carries the phosphoserine modification. In terms of domain architecture, F-box spans 173–224 (QTHISVLPMEVLMYIFRWVVSSDLDLRSLEQLSLVCRGFYICARDPEIWRLA).

As to quaternary structure, part of the SCF (SKP1-CUL1-F-box) E3 ubiquitin-protein ligase complex SCF(FBXO9) composed of CUL1, SKP1, RBX1 and FBXO9. Interacts with TTI1 and TELO2; when TTI1 and TELO2 are phosphorylated by CK2.

The protein localises to the cytoplasm. Its pathway is protein modification; protein ubiquitination. Substrate recognition component of a SCF (SKP1-CUL1-F-box protein) E3 ubiquitin-protein ligase complex which mediates the ubiquitination and subsequent proteasomal degradation of target proteins and plays a role in several biological processes such as cell cycle, cell proliferation, or maintenance of chromosome stability. Ubiquitinates mTORC1-bound TTI1 and TELO2 when they are phosphorylated by CK2 following growth factor deprivation, leading to their degradation. In contrast, does not mediate ubiquitination of TTI1 and TELO2 when they are part of the mTORC2 complex. As a consequence, mTORC1 is inactivated to restrain cell growth and protein translation, while mTORC2 is the activated due to the relief of feedback inhibition by mTORC1. Plays a role in maintaining epithelial cell survival by regulating the turn-over of chromatin modulator PRMT4 through ubiquitination and degradation by the proteasomal pathway. Also regulates PPARgamma stability by facilitating PPARgamma/PPARG ubiquitination and thereby plays a role in adipocyte differentiation. The chain is F-box only protein 9 (Fbxo9) from Rattus norvegicus (Rat).